A 398-amino-acid chain; its full sequence is Enolase (398 aa).

(2R)-2-phosphoglycerate is bound at residue Gln154. The Proton donor role is filled by Glu196. Mg(2+) contacts are provided by Asp232, Glu273, and Asp300. Positions 325, 354, 355, and 376 each coordinate (2R)-2-phosphoglycerate. The active-site Proton acceptor is Lys325.

This sequence belongs to the enolase family. It depends on Mg(2+) as a cofactor.

It is found in the cytoplasm. Its subcellular location is the secreted. The protein resides in the cell surface. It catalyses the reaction (2R)-2-phosphoglycerate = phosphoenolpyruvate + H2O. Its pathway is carbohydrate degradation; glycolysis; pyruvate from D-glyceraldehyde 3-phosphate: step 4/5. Functionally, catalyzes the reversible conversion of 2-phosphoglycerate (2-PG) into phosphoenolpyruvate (PEP). It is essential for the degradation of carbohydrates via glycolysis. In Halobacterium salinarum (strain ATCC 700922 / JCM 11081 / NRC-1) (Halobacterium halobium), this protein is Enolase.